Reading from the N-terminus, the 29-residue chain is Trypsin inhibitor 4 (29 aa).

3 cysteine pairs are disulfide-bonded: cysteine 3–cysteine 20, cysteine 10–cysteine 22, and cysteine 16–cysteine 28.

The protein belongs to the protease inhibitor I7 (squash-type serine protease inhibitor) family.

It is found in the secreted. Its function is as follows. Strongly inhibits trypsin, weakly inhibits chymotrypsin. This chain is Trypsin inhibitor 4, found in Cyclanthera pedata (Achocha).